The chain runs to 176 residues: NAD(P)H-quinone oxidoreductase subunit I, chloroplastic (176 aa).

4Fe-4S ferredoxin-type domains follow at residues 55–84 (GRIHFEFDKCIACEVCVRVCPIDLPVVDWE) and 95–124 (LNYSIDFGICIFCGNCVEYCPTNCLSMTEE). [4Fe-4S] cluster-binding residues include cysteine 64, cysteine 67, cysteine 70, cysteine 74, cysteine 104, cysteine 107, cysteine 110, and cysteine 114.

It belongs to the complex I 23 kDa subunit family. As to quaternary structure, NDH is composed of at least 16 different subunits, 5 of which are encoded in the nucleus. [4Fe-4S] cluster is required as a cofactor.

It localises to the plastid. Its subcellular location is the chloroplast thylakoid membrane. It catalyses the reaction a plastoquinone + NADH + (n+1) H(+)(in) = a plastoquinol + NAD(+) + n H(+)(out). The catalysed reaction is a plastoquinone + NADPH + (n+1) H(+)(in) = a plastoquinol + NADP(+) + n H(+)(out). NDH shuttles electrons from NAD(P)H:plastoquinone, via FMN and iron-sulfur (Fe-S) centers, to quinones in the photosynthetic chain and possibly in a chloroplast respiratory chain. The immediate electron acceptor for the enzyme in this species is believed to be plastoquinone. Couples the redox reaction to proton translocation, and thus conserves the redox energy in a proton gradient. This is NAD(P)H-quinone oxidoreductase subunit I, chloroplastic from Populus alba (White poplar).